Consider the following 387-residue polypeptide: MTSHPVFIDLSLDEQVQELRKYFKKLGAEISSEKSNKGVEDDLHKIIGVCDVCFKDGEPAQIDGILNSIVSIMITIPLDRGENIVLAYCEKMTKAPNQPLAKVCLQSLWRLFNNLDTASPLRYHVYYHLVQVAKQCDQVLEVFTGVDQLKSQFANCPPSSEQMQKLYRLLHDVTKDTNLERSSKVMIELLGTYTADNACVAREDAMKCIVTALADPNTFLLDPLLSLKPVRFLEGDLIHDLLSIFVSEKLPAYVEFYEEHKEFVNSQGLNHEQNMKKMRLLTFMQLAESNAEMSFEALTKELQITENEVEPFVIEVLKTKLVRARLDQANRKVHISSTMHRTFGAPQWEQLRDLLQAWKENLSSVREGLTNVASAQLDLARSQKLIH.

Positions 181 to 340 (RSSKVMIELL…RKVHISSTMH (160 aa)) constitute a PCI domain.

The protein belongs to the eIF-3 subunit M family. In terms of assembly, component of the eukaryotic translation initiation factor 3 (eIF-3) complex. The eIF-3 complex interacts with pix.

It localises to the cytoplasm. The protein localises to the golgi apparatus. In terms of biological role, component of the eukaryotic translation initiation factor 3 (eIF-3) complex, which is involved in protein synthesis of a specialized repertoire of mRNAs and, together with other initiation factors, stimulates binding of mRNA and methionyl-tRNAi to the 40S ribosome. The eIF-3 complex specifically targets and initiates translation of a subset of mRNAs involved in cell proliferation. This chain is Eukaryotic translation initiation factor 3 subunit M, found in Drosophila willistoni (Fruit fly).